Here is a 146-residue protein sequence, read N- to C-terminus: Hemoglobin subunit beta (146 aa).

Val1 is subject to N-acetylvaline. Residues 2 to 146 (HLTAEEKNAI…VANALAHKYH (145 aa)) enclose the Globin domain. At Thr12 the chain carries Phosphothreonine. Lys59 carries the N6-acetyllysine modification. His63 contacts heme b. At Lys82 the chain carries N6-acetyllysine. A heme b-binding site is contributed by His92. Cys93 is subject to S-nitrosocysteine. N6-acetyllysine is present on Lys144.

This sequence belongs to the globin family. As to quaternary structure, heterotetramer of two alpha chains and two beta chains. Red blood cells.

Functionally, involved in oxygen transport from the lung to the various peripheral tissues. In Osphranter rufus (Red kangaroo), this protein is Hemoglobin subunit beta (HBB).